The following is a 255-amino-acid chain: Probable membrane transporter protein HI_0198 (255 aa).

Transmembrane regions (helical) follow at residues L7–G27, G28–G48, I76–S96, V99–F119, L132–F152, G153–P173, F191–G211, and V235–F255.

This sequence belongs to the 4-toluene sulfonate uptake permease (TSUP) (TC 2.A.102) family.

The protein localises to the cell membrane. In Haemophilus influenzae (strain ATCC 51907 / DSM 11121 / KW20 / Rd), this protein is Probable membrane transporter protein HI_0198.